The following is a 416-amino-acid chain: Enterobactin exporter EntS (416 aa).

Residues 1-21 (MNKQSWLLNLSLLKTHPAFRA) are Cytoplasmic-facing. A helical membrane pass occupies residues 22 to 42 (VFLARFISIVSLGLLGVAVPV). At 43-55 (QIQMMTHSTWQVG) the chain is on the periplasmic side. The chain crosses the membrane as a helical span at residues 56-76 (LSVTLTGGAMFVGLMVGGVLA). Residues 77 to 83 (DRYERKK) lie on the Cytoplasmic side of the membrane. A helical transmembrane segment spans residues 84-104 (VILLARGTCGIGFIGLCLNAL). Over 105 to 109 (LPEPS) the chain is Periplasmic. A helical transmembrane segment spans residues 110 to 130 (LLAIYLLGLWDGFFASLGVTA). Residues 131–156 (LLAATPALVGRENLMQAGALTMLTVR) lie on the Cytoplasmic side of the membrane. The helical transmembrane segment at 157-177 (LGSVISPMIGGLLLATGGVAW) threads the bilayer. Position 178 (Asn-178) is a topological domain, periplasmic. The helical transmembrane segment at 179 to 199 (YGLAAAGTFITLLPLLSLPAL) threads the bilayer. The Cytoplasmic portion of the chain corresponds to 200–218 (PPPPQPREHPLKSLLAGFR). The helical transmembrane segment at 219-239 (FLLASPLVGGIALLGGLLTMA) threads the bilayer. Topologically, residues 240–256 (SAVRVLYPALADNWQMS) are periplasmic. Residues 257–277 (AAEIGFLYAAIPLGAAIGALT) form a helical membrane-spanning segment. Topologically, residues 278-287 (SGKLAHSARP) are cytoplasmic. Residues 288-307 (GLLMLLSTLGSFLAIGLFGL) form a helical membrane-spanning segment. At 308 to 313 (MPMWIL) the chain is on the periplasmic side. The chain crosses the membrane as a helical span at residues 314–336 (GVVCLALFGWLSAVSSLLQYTML). Residues 337-356 (QTQTPEAMLGRINGLWTAQN) are Cytoplasmic-facing. The chain crosses the membrane as a helical span at residues 357–377 (VTGDAIGAALLGGLGAMMTPV). A topological domain (periplasmic) is located at residue Ala-378. Residues 379–399 (SASASGFGLLIIGVLLLLVLV) form a helical membrane-spanning segment. The Cytoplasmic segment spans residues 400-416 (ELRRFRQTPPQVTASDS).

Belongs to the major facilitator superfamily. EntS (TC 2.A.1.38) family.

Its subcellular location is the cell inner membrane. Its function is as follows. Component of an export pathway for enterobactin. This Shigella boydii serotype 18 (strain CDC 3083-94 / BS512) protein is Enterobactin exporter EntS.